We begin with the raw amino-acid sequence, 728 residues long: Glutamate--cysteine ligase (728 aa).

Residues 517–552 (PVRTTRRGGSASRSASGTSTPNSGSSRPATPPLGPV) form a disordered region. The span at 523–536 (RGGSASRSASGTST) shows a compositional bias: low complexity.

Belongs to the glutamate--cysteine ligase type 3 family.

It carries out the reaction L-cysteine + L-glutamate + ATP = gamma-L-glutamyl-L-cysteine + ADP + phosphate + H(+). Its pathway is sulfur metabolism; glutathione biosynthesis; glutathione from L-cysteine and L-glutamate: step 1/2. This chain is Glutamate--cysteine ligase (gcs-1), found in Neurospora crassa (strain ATCC 24698 / 74-OR23-1A / CBS 708.71 / DSM 1257 / FGSC 987).